The sequence spans 384 residues: tRNA-specific 2-thiouridylase MnmA (384 aa).

Residues 21–28 (GMSGGVDS) and methionine 47 contribute to the ATP site. Positions 107-109 (NPD) are interaction with target base in tRNA. Cysteine 112 (nucleophile) is an active-site residue. The cysteines at positions 112 and 208 are disulfide-linked. Glycine 136 is an ATP binding site. The interval 158–160 (KDQ) is interaction with tRNA. Cysteine 208 serves as the catalytic Cysteine persulfide intermediate. The tract at residues 320–321 (RY) is interaction with tRNA.

Belongs to the MnmA/TRMU family.

It is found in the cytoplasm. It carries out the reaction S-sulfanyl-L-cysteinyl-[protein] + uridine(34) in tRNA + AH2 + ATP = 2-thiouridine(34) in tRNA + L-cysteinyl-[protein] + A + AMP + diphosphate + H(+). Its function is as follows. Catalyzes the 2-thiolation of uridine at the wobble position (U34) of tRNA, leading to the formation of s(2)U34. The sequence is that of tRNA-specific 2-thiouridylase MnmA from Chromohalobacter salexigens (strain ATCC BAA-138 / DSM 3043 / CIP 106854 / NCIMB 13768 / 1H11).